The following is a 48-amino-acid chain: ATP synthase protein 8 (48 aa).

Met-1 bears the N-formylmethionine mark. Over 1-12 (MPQLVPFYFTNQ) the chain is Mitochondrial intermembrane. Residues 13 to 32 (IFYGFASLSVIVYLFSIYIL) traverse the membrane as a helical segment. Over 33-48 (PHYLEIYVTRIFITKT) the chain is Mitochondrial matrix.

In terms of assembly, F-type ATP synthases have 2 components, the catalytic core F(1) and the membrane-embedded component F(0), linked together by a central stalk and a peripheral stalk. The central stalk, also called rotor shaft, is often seen as part of F(1). The peripheral stalk is seen as part of F(0). F(0) contains the membrane channel next to the rotor. F-type ATP synthases form dimers but each monomer functions independently in ATP generation. The dimer consists of 17 different polypeptides: ATP1 (subunit alpha, 3 molecules per monomer, part of F(1)), ATP2 (subunit beta, 3 copies per monomer, part of F(1)), ATP3 (subunit gamma, part of the central stalk), ATP4 (subunit b, part of the peripheral stalk), ATP5/OSCP (subunit 5/OSCP, part of the peripheral stalk), ATP6 (subunit a, part of the peripheral stalk), ATP7 (subunit d, part of the peripheral stalk), ATP8 (subunit 8, part of the peripheral stalk), OLI1 (subunit c, part of the rotor, 10 molecules per monomer), ATP14 (subunit h, part of the peripheral stalk), ATP15 (subunit epsilon, part of the central stalk), ATP16 (subunit delta, part of the central stalk), ATP17 (subunit f, part of the peripheral stalk), ATP18 (subunit i/j, part of the peripheral stalk), ATP19 (subunit k, dimer-specific, at interface between monomers), ATP20 (subunit g, at interface between monomers), TIM11 (subunit e, at interface between monomers).

The protein localises to the mitochondrion inner membrane. In terms of biological role, mitochondrial membrane ATP synthase (F(1)F(0) ATP synthase or Complex V) produces ATP from ADP in the presence of a proton gradient across the membrane which is generated by electron transport complexes of the respiratory chain. F-type ATP synthases consist of two structural domains, F(1) - containing the extramembraneous catalytic core, and F(0) - containing the membrane proton channel, linked together by a central stalk and a peripheral stalk. During catalysis, ATP synthesis in the catalytic domain of F(1) is coupled via a rotary mechanism of the central stalk subunits to proton translocation. Part of the complex F(0) domain. Minor subunit located with subunit a/ATP6 in the membrane. The sequence is that of ATP synthase protein 8 from Yarrowia lipolytica (strain CLIB 122 / E 150) (Yeast).